The following is a 415-amino-acid chain: Squalene synthase 10 (415 aa).

The next 2 membrane-spanning stretches (helical) occupy residues 281–301 (AIFR…ALCF) and 392–412 (LIVI…SNLP).

It belongs to the phytoene/squalene synthase family. Mg(2+) serves as cofactor. Mn(2+) is required as a cofactor.

It is found in the endoplasmic reticulum membrane. The enzyme catalyses 2 (2E,6E)-farnesyl diphosphate + NADH + H(+) = squalene + 2 diphosphate + NAD(+). The catalysed reaction is 2 (2E,6E)-farnesyl diphosphate + NADPH + H(+) = squalene + 2 diphosphate + NADP(+). It participates in terpene metabolism; lanosterol biosynthesis; lanosterol from farnesyl diphosphate: step 1/3. Its function is as follows. Component of the triterpene saponins (e.g. ginsenosides or panaxosides) and phytosterols biosynthetic pathways. Catalyzes the biosynthesis of squalene. This is Squalene synthase 10 from Panax ginseng (Korean ginseng).